The following is a 673-amino-acid chain: MLHGGDYNPDQWLDRPDILADDIKLMKLAHTNTFSVGIFSWSALEPEEGVYTFEWLDDIFESIHRNGGRIILATPSGARPAWLSQKYPEVLRVNAERVKQLHGGRHNHCFTSYVYREKTKEINRMLAERYGSQHALLMWHVSNEYGGECHCDQCQHAFRDWLKKKYNHDIKSLNDAWWTPFWSHTFNDWSQIESPSPIGENAVHGLNLDWRRFVTDQTISFFQNEIVPLKEITPNIPITTNFMADTHDLIPFQGLDYSKFAKHLDVISWDAYPAWHNDWESTADLAMKVGFINDLYRSLKQQPFLLMESTPSAVNWHDFNKAKRPGMHLLSSVQMIAHGSDSILYFQWRKSRGSSEKFHGAVVGHDNCSENRVFKEVAKVGQTLEALSEVTGTIRPADVAILYDWENHWALQDAQGFGMKTKRYPQTLHEHYRAFWERDIPVDVITKEQDFSSYRLLIVPMLYLASEETIARLKAFAANGGTLVMTYISGIVNESDLTYLGGWPKDLQEMFGMEPVETDTLYPGDKNAVRYQNRSYELKDYATVLKLSTADPEGFYEDDFYADTTAVTSHPYKQGKTYYIGARLSSQFHRDFYGTLIKELAIQPALDVKHQPGVSVQVRQDEENDYIFIMNFTEKRQPVVLASAVKDMLTGETLAGEVTLEKYEARIAVKAKE.

Arg105 is a substrate binding site. Zn(2+) is bound at residue Cys109. Residue Asn143 coordinates substrate. The active-site Proton donor is the Glu144. The Zn(2+) site is built by Cys149, Cys151, and Cys154. Residue Glu308 is the Nucleophile of the active site. Residues Trp316 and 356–359 each bind substrate; that span reads EKFH.

It belongs to the glycosyl hydrolase 42 family. In terms of assembly, homodimer.

The catalysed reaction is Hydrolysis of terminal non-reducing beta-D-galactose residues in beta-D-galactosides.. With respect to regulation, inhibited by hydrolysis end products D-galactose and D-glucose. The hydrolysis of o-nitrophenyl-beta-D-galactopyranoside (ONPG) is slightly activated by monovalent ions, Na(+) and K(+). Concentrations of these ions in the range of 1-100 mM exert the stimulating effects. The presence of 1 mM Mn(2+) together with the presence of 10 mM Na(+) slightly stimulates the activity, while presence of 10 mM Mn(2+) inhibits the activity by about 40%. Functionally, catalyzes the hydrolysis of lactose to its constituent monosaccharides glucose and galactose. Possesses a low level of transgalactosylation activity for the production of galacto-oligosaccharides (GOS) from lactose. This chain is Beta-galactosidase GalA, found in Bacillus licheniformis (strain ATCC 14580 / DSM 13 / JCM 2505 / CCUG 7422 / NBRC 12200 / NCIMB 9375 / NCTC 10341 / NRRL NRS-1264 / Gibson 46).